Here is a 326-residue protein sequence, read N- to C-terminus: Peroxidase 39 (326 aa).

The first 23 residues, 1-23 (MTRFGLALLMILVIQGLVTFSEA), serve as a signal peptide directing secretion. 4 disulfides stabilise this stretch: Cys34–Cys114, Cys67–Cys72, Cys120–Cys322, and Cys199–Cys232. His65 acts as the Proton acceptor in catalysis. Residues Asp66, Val69, Gly71, Asp73, and Ser75 each coordinate Ca(2+). Residue Asn79 is glycosylated (N-linked (GlcNAc...) asparagine). Substrate is bound at residue Pro162. Asn167 is a glycosylation site (N-linked (GlcNAc...) asparagine). Residue His192 participates in heme b binding. Position 193 (Thr193) interacts with Ca(2+). Residues Asn208 and Asn238 are each glycosylated (N-linked (GlcNAc...) asparagine). The Ca(2+) site is built by Asp245, Ser248, and Asp253.

This sequence belongs to the peroxidase family. Classical plant (class III) peroxidase subfamily. The cofactor is heme b. It depends on Ca(2+) as a cofactor. In terms of tissue distribution, slightly expressed in roots.

Its subcellular location is the secreted. The catalysed reaction is 2 a phenolic donor + H2O2 = 2 a phenolic radical donor + 2 H2O. Functionally, removal of H(2)O(2), oxidation of toxic reductants, biosynthesis and degradation of lignin, suberization, auxin catabolism, response to environmental stresses such as wounding, pathogen attack and oxidative stress. These functions might be dependent on each isozyme/isoform in each plant tissue. This is Peroxidase 39 (PER39) from Arabidopsis thaliana (Mouse-ear cress).